The sequence spans 103 residues: Large ribosomal subunit protein uL24 (103 aa).

This sequence belongs to the universal ribosomal protein uL24 family. As to quaternary structure, part of the 50S ribosomal subunit.

Functionally, one of two assembly initiator proteins, it binds directly to the 5'-end of the 23S rRNA, where it nucleates assembly of the 50S subunit. Its function is as follows. One of the proteins that surrounds the polypeptide exit tunnel on the outside of the subunit. The polypeptide is Large ribosomal subunit protein uL24 (Bacillus licheniformis (strain ATCC 14580 / DSM 13 / JCM 2505 / CCUG 7422 / NBRC 12200 / NCIMB 9375 / NCTC 10341 / NRRL NRS-1264 / Gibson 46)).